The following is an 804-amino-acid chain: Ion-translocating oxidoreductase complex subunit C (804 aa).

2 4Fe-4S ferredoxin-type domains span residues 366–397 (SEMGQNEAEQGCIRCSACADACPAALLPQQLY) and 407–436 (KARAHNIADCIECGACAYVCPSNIPLVQYY). [4Fe-4S] cluster is bound by residues C377, C380, C383, C387, C416, C419, C422, and C426. 2 disordered regions span residues 466-532 (RLER…EVRV) and 567-804 (KAAQ…MQED). Composition is skewed to low complexity over residues 484-495 (SVASSDAGAIAA), 567-582 (KAAQAAEASPTEAPQQ), 592-619 (AAVAAAVARTKAKKAAQAAEASPTEAPQ), 629-660 (KAAVAAAVARAKAKKAAQAAEASATEAPQQSA), 668-693 (AAVAAAVARAKAKKAAQAAEASATEA), 706-731 (AAVAAAVARAKAKKAAQAAEASATEA), and 744-769 (AAVAAAVARAKAKKAAQAAEASATEA).

The protein belongs to the 4Fe4S bacterial-type ferredoxin family. RnfC subfamily. The complex is composed of six subunits: RnfA, RnfB, RnfC, RnfD, RnfE and RnfG. It depends on [4Fe-4S] cluster as a cofactor.

It localises to the cell inner membrane. Functionally, part of a membrane-bound complex that couples electron transfer with translocation of ions across the membrane. In Erwinia tasmaniensis (strain DSM 17950 / CFBP 7177 / CIP 109463 / NCPPB 4357 / Et1/99), this protein is Ion-translocating oxidoreductase complex subunit C.